The following is a 305-amino-acid chain: UDP-3-O-acyl-N-acetylglucosamine deacetylase (305 aa).

Zn(2+) is bound by residues histidine 78, histidine 235, and aspartate 239. Histidine 262 (proton donor) is an active-site residue.

The protein belongs to the LpxC family. Zn(2+) is required as a cofactor.

The enzyme catalyses a UDP-3-O-[(3R)-3-hydroxyacyl]-N-acetyl-alpha-D-glucosamine + H2O = a UDP-3-O-[(3R)-3-hydroxyacyl]-alpha-D-glucosamine + acetate. It functions in the pathway glycolipid biosynthesis; lipid IV(A) biosynthesis; lipid IV(A) from (3R)-3-hydroxytetradecanoyl-[acyl-carrier-protein] and UDP-N-acetyl-alpha-D-glucosamine: step 2/6. Its function is as follows. Catalyzes the hydrolysis of UDP-3-O-myristoyl-N-acetylglucosamine to form UDP-3-O-myristoylglucosamine and acetate, the committed step in lipid A biosynthesis. This is UDP-3-O-acyl-N-acetylglucosamine deacetylase from Citrifermentans bemidjiense (strain ATCC BAA-1014 / DSM 16622 / JCM 12645 / Bem) (Geobacter bemidjiensis).